The sequence spans 737 residues: Genome polyprotein (737 aa).

The residue at position 2 (Ser2) is an N-acetylserine; by host. Residues 2-23 (STNPKPQRKTKRNTNRRPQDVK) form an interaction with STAT1 region. Residues 2 to 58 (STNPKPQRKTKRNTNRRPQDVKFPGGGQIVGGVYLLPRRGPRLGVRATRKTSERSQP) are interaction with EIF2AK2/PKR. Residues 2–59 (STNPKPQRKTKRNTNRRPQDVKFPGGGQIVGGVYLLPRRGPRLGVRATRKTSERSQPR) form an interaction with DDX3X region. A disordered region spans residues 2-75 (STNPKPQRKT…PKDRRSTGKS (74 aa)). Over 2 to 168 (STNPKPQRKT…EDGINYATGN (167 aa)) the chain is Cytoplasmic. 2 short sequence motifs (nuclear localization signal) span residues 5–13 (PKPQRKTKR) and 38–43 (PRRGPR). Residues 7–16 (PQRKTKRNTN) show a composition bias toward basic residues. A compositionally biased stretch (low complexity) spans 32-47 (GGVYLLPRRGPRLGVR). Residue Ser53 is modified to Phosphoserine; by host. 2 consecutive short sequence motifs (nuclear localization signal) follow at residues 58–64 (PRGRRQP) and 66–71 (PKDRRS). Residues Ser99 and Ser116 each carry the phosphoserine; by host modification. The interval 112-152 (PRHRSRNLGKVIDTLTCGFADLMGYIPVVGAPVGGVARALA) is important for endoplasmic reticulum and mitochondrial localization. The segment at 122–173 (VIDTLTCGFADLMGYIPVVGAPVGGVARALAHGVRVLEDGINYATGNLPGCS) is interaction with APOA2. An important for lipid droplets localization region spans residues 164 to 167 (YATG). The chain crosses the membrane as a helical span at residues 169–189 (LPGCSFSIFLLALLSCVTVPV). Positions 178–191 (LLALLSCVTVPVSA) are cleaved as a propeptide — ER anchor for the core protein, removed in mature form by host signal peptidase. Residues 190-358 (SAVEVRNISS…FGGHWGVVFG (169 aa)) are Lumenal-facing. 3 N-linked (GlcNAc...) asparagine; by host glycosylation sites follow: Asn196, Asn209, and Asn233. Residues 265-296 (IVMAATVCSALYVGDICGAVMIASQAFIISPE) form an important for fusion region. Asn305 carries an N-linked (GlcNAc...) asparagine; by host glycan. A helical transmembrane segment spans residues 359–379 (LAYFSMQGAWAKVIAILLLVA). Topologically, residues 380–729 (GVDASTQVTG…WEWVILLFLL (350 aa)) are lumenal. Positions 385–411 (TQVTGGQAAHTVRGVASIFSPGSRQDI) are HVR1. N-linked (GlcNAc...) (high mannose) asparagine; by host glycosylation is found at Asn417, Asn423, Asn430, and Asn448. Intrachain disulfides connect Cys429/Cys554, Cys452/Cys459, Cys488/Cys496, and Cys505/Cys510. The tract at residues 474 to 481 (YETNVTNE) is HVR2. Positions 482-495 (EDMRPYCWHYPPKP) are CD81-binding 1. Asn542 carries an N-linked (GlcNAc...) asparagine; by host glycan. Residues 546-553 (PPRGAWFG) form a CD81-binding 2 region. A glycan (N-linked (GlcNAc...) (high mannose) asparagine; by host) is linked at Asn558. Cystine bridges form between Cys566-Cys571, Cys585-Cys589, Cys601-Cys624, and Cys611-Cys648. N-linked (GlcNAc...) (high mannose) asparagine; by host glycosylation is found at Asn627 and Asn649. A disulfide bond links Cys656 and Cys681. Residues 664–675 (SQQSPLLHSTTE) are PKR/eIF2-alpha phosphorylation homology domain (PePHD). Residues 730-737 (LADARVCA) traverse the membrane as a helical segment.

It belongs to the hepacivirus polyprotein family. Homooligomer. Interacts with E1 (via C-terminus). Interacts with the non-structural protein 5A. Interacts (via N-terminus) with host STAT1 (via SH2 domain); this interaction results in decreased STAT1 phosphorylation and ubiquitin-mediated proteasome-dependent STAT1 degradation, leading to decreased IFN-stimulated gene transcription. Interacts with host STAT3; this interaction constitutively activates STAT3. Interacts with host LTBR receptor. Interacts with host TNFRSF1A receptor and possibly induces apoptosis. Interacts with host HNRPK. Interacts with host YWHAE. Interacts with host UBE3A/E6AP. Interacts with host DDX3X. Interacts with host APOA2. Interacts with host RXRA protein. Interacts with host SP110 isoform 3/Sp110b; this interaction sequesters the transcriptional corepressor SP110 away from the nucleus. Interacts with host CREB3 nuclear transcription protein; this interaction triggers cell transformation. Interacts with host ACY3. Interacts with host C1QR1. Interacts with host RBM24; this interaction, which enhances the interaction of the mature core protein with 5'-UTR, may inhibit viral translation and favor replication. Interacts with host EIF2AK2/PKR; this interaction induces the autophosphorylation of EIF2AK2. Part of the viral assembly initiation complex composed of NS2, E1, E2, NS3, NS4A, NS5A and the mature core protein. In terms of assembly, forms a heterodimer with envelope glycoprotein E2. Interacts with mature core protein. Interacts with protease NS2. The heterodimer E1/E2 interacts with host CLDN1; this interaction plays a role in viral entry into host cell. Interacts with host SPSB2 (via C-terminus). Part of the viral assembly initiation complex composed of NS2, E1, E2, NS3, NS4A, NS5A and the mature core protein. As to quaternary structure, forms a heterodimer with envelope glycoprotein E1. Interacts with host CD81 and SCARB1 receptors; these interactions play a role in viral entry into host cell. Interacts with host EIF2AK2/PKR; this interaction inhibits EIF2AK2 and probably allows the virus to evade the innate immune response. Interacts with host CD209/DC-SIGN and CLEC4M/DC-SIGNR. Interact with host SPCS1; this interaction is essential for viral particle assembly. Interacts with protease NS2. The heterodimer E1/E2 interacts with host CLDN1; this interaction plays a role in viral entry into host cell. Part of the viral assembly initiation complex composed of NS2, E1, E2, NS3, NS4A, NS5A and the mature core protein. Specific enzymatic cleavages in vivo yield mature proteins. The structural proteins, core, E1, E2 and p7 are produced by proteolytic processing by host signal peptidases. The core protein precursor is synthesized as a 23 kDa, which is retained in the ER membrane through the hydrophobic signal peptide. Cleavage by the signal peptidase releases the 21 kDa mature core protein. The cleavage of the core protein precursor occurs between aminoacids 176 and 188 but the exact cleavage site is not known. Some degraded forms of the core protein appear as well during the course of infection. The other proteins (p7, NS2, NS3, NS4A, NS4B, NS5A and NS5B) are cleaved by the viral proteases. Autoprocessing between NS2 and NS3 is mediated by the NS2 cysteine protease catalytic domain and regulated by the NS3 N-terminal domain. Post-translationally, phosphorylated by host PKC and PKA. In terms of processing, ubiquitinated; mediated by UBE3A and leading to core protein subsequent proteasomal degradation. Highly N-glycosylated.

It is found in the host endoplasmic reticulum membrane. The protein localises to the host mitochondrion membrane. The protein resides in the virion. It localises to the host cytoplasm. Its subcellular location is the host nucleus. It is found in the host lipid droplet. The protein localises to the virion membrane. Packages viral RNA to form a viral nucleocapsid, and promotes virion budding. Participates in the viral particle production as a result of its interaction with the non-structural protein 5A. Binds RNA and may function as a RNA chaperone to induce the RNA structural rearrangements taking place during virus replication. Modulates viral translation initiation by interacting with viral IRES and 40S ribosomal subunit. Affects various cell signaling pathways, host immunity and lipid metabolism. Prevents the establishment of cellular antiviral state by blocking the interferon-alpha/beta (IFN-alpha/beta) and IFN-gamma signaling pathways and by blocking the formation of phosphorylated STAT1 and promoting ubiquitin-mediated proteasome-dependent degradation of STAT1. Activates STAT3 leading to cellular transformation. Regulates the activity of cellular genes, including c-myc and c-fos. May repress the promoter of p53, and sequester CREB3 and SP110 isoform 3/Sp110b in the cytoplasm. Represses cell cycle negative regulating factor CDKN1A, thereby interrupting an important check point of normal cell cycle regulation. Targets transcription factors involved in the regulation of inflammatory responses and in the immune response: suppresses TNF-induced NF-kappa-B activation, and activates AP-1. Binds to dendritic cells (DCs) via C1QR1, resulting in down-regulation of T-lymphocytes proliferation. Alters lipid metabolism by interacting with hepatocellular proteins involved in lipid accumulation and storage. Induces up-regulation of FAS promoter activity, and thereby contributes to the increased triglyceride accumulation in hepatocytes (steatosis). Its function is as follows. Forms a heterodimer with envelope glycoprotein E2, which mediates virus attachment to the host cell, virion internalization through clathrin-dependent endocytosis and fusion with host membrane. Fusion with the host cell is most likely mediated by both E1 and E2, through conformational rearrangements of the heterodimer required for fusion rather than a classical class II fusion mechanism. E1/E2 heterodimer binds host apolipoproteins such as APOB and ApoE thereby forming a lipo-viro-particle (LVP). APOE associated to the LVP allows the initial virus attachment to cell surface receptors such as the heparan sulfate proteoglycans (HSPGs), syndecan-1 (SDC1), syndecan-1 (SDC2), the low-density lipoprotein receptor (LDLR) and scavenger receptor class B type I (SCARB1). The cholesterol transfer activity of SCARB1 allows E2 exposure and binding of E2 to SCARB1 and the tetraspanin CD81. E1/E2 heterodimer binding on CD81 activates the epithelial growth factor receptor (EGFR) signaling pathway. Diffusion of the complex E1-E2-EGFR-SCARB1-CD81 to the cell lateral membrane allows further interaction with Claudin 1 (CLDN1) and occludin (OCLN) to finally trigger HCV entry. In terms of biological role, forms a heterodimer with envelope glycoprotein E1, which mediates virus attachment to the host cell, virion internalization through clathrin-dependent endocytosis and fusion with host membrane. Fusion with the host cell is most likely mediated by both E1 and E2, through conformational rearrangements of the heterodimer required for fusion rather than a classical class II fusion mechanism. The interaction between envelope glycoprotein E2 and host apolipoprotein E/APOE allows the proper assembly, maturation and infectivity of the viral particles. This interaction is probably promoted via the up-regulation of cellular autophagy by the virus. E1/E2 heterodimer binds host apolipoproteins such as APOB and APOE thereby forming a lipo-viro-particle (LVP). APOE associated to the LVP allows the initial virus attachment to cell surface receptors such as the heparan sulfate proteoglycans (HSPGs), syndecan-1 (SDC1), syndecan-1 (SDC2), the low-density lipoprotein receptor (LDLR) and scavenger receptor class B type I (SCARB1). The cholesterol transfer activity of SCARB1 allows E2 exposure and binding of E2 to SCARB1 and the tetraspanin CD81. E1/E2 heterodimer binding on CD81 activates the epithelial growth factor receptor (EGFR) signaling pathway. Diffusion of the complex E1-E2-EGFR-SCARB1-CD81 to the cell lateral membrane allows further interaction with Claudin 1 (CLDN1) and occludin (OCLN) to finally trigger HCV entry. Inhibits host EIF2AK2/PKR activation, preventing the establishment of an antiviral state. Viral ligand for CD209/DC-SIGN and CLEC4M/DC-SIGNR, which are respectively found on dendritic cells (DCs), and on liver sinusoidal endothelial cells and macrophage-like cells of lymph node sinuses. These interactions allow the capture of circulating HCV particles by these cells and subsequent facilitated transmission to permissive cells such as hepatocytes and lymphocyte subpopulations. This is Genome polyprotein from Hepatitis C virus (isolate HC-J7) (HCV).